Reading from the N-terminus, the 519-residue chain is Galactokinase (519 aa).

Positions 47, 53, 54, and 56 each coordinate alpha-D-galactose. The ATP site is built by Gly-159, Gly-161, Ser-163, and Ser-164. Residue Asp-209 coordinates alpha-D-galactose. Asp-209 acts as the Proton acceptor in catalysis. Residues Asn-257 and Lys-258 each coordinate ATP. Tyr-266 is a binding site for alpha-D-galactose.

It belongs to the GHMP kinase family. GalK subfamily.

The catalysed reaction is alpha-D-galactose + ATP = alpha-D-galactose 1-phosphate + ADP + H(+). It participates in carbohydrate metabolism; galactose metabolism. In terms of biological role, galactokinase is a key enzyme in the galactose metabolism where it catalyzes the conversion of alpha-D-galactose to galactose 1-phosphate. Can also induce the transcription of the gal genes in response to the organism being challenged with galactose as the sole source of carbon. This is Galactokinase (gal1) from Schizosaccharomyces pombe (strain 972 / ATCC 24843) (Fission yeast).